The primary structure comprises 294 residues: Acetyl-coenzyme A carboxylase carboxyl transferase subunit beta (294 aa).

The CoA carboxyltransferase N-terminal domain occupies 30 to 294; the sequence is IMTKCPECKK…PEAGGESDGE (265 aa). Residues cysteine 34, cysteine 37, cysteine 53, and cysteine 56 each contribute to the Zn(2+) site. A C4-type zinc finger spans residues 34 to 56; sequence CPECKKIMYTKELQKNLMVCNYC.

The protein belongs to the AccD/PCCB family. Acetyl-CoA carboxylase is a heterohexamer composed of biotin carboxyl carrier protein (AccB), biotin carboxylase (AccC) and two subunits each of ACCase subunit alpha (AccA) and ACCase subunit beta (AccD). Requires Zn(2+) as cofactor.

Its subcellular location is the cytoplasm. It carries out the reaction N(6)-carboxybiotinyl-L-lysyl-[protein] + acetyl-CoA = N(6)-biotinyl-L-lysyl-[protein] + malonyl-CoA. It participates in lipid metabolism; malonyl-CoA biosynthesis; malonyl-CoA from acetyl-CoA: step 1/1. In terms of biological role, component of the acetyl coenzyme A carboxylase (ACC) complex. Biotin carboxylase (BC) catalyzes the carboxylation of biotin on its carrier protein (BCCP) and then the CO(2) group is transferred by the transcarboxylase to acetyl-CoA to form malonyl-CoA. This Listeria innocua serovar 6a (strain ATCC BAA-680 / CLIP 11262) protein is Acetyl-coenzyme A carboxylase carboxyl transferase subunit beta.